A 474-amino-acid polypeptide reads, in one-letter code: ATP synthase subunit beta (474 aa).

152–159 (GGAGVGKT) serves as a coordination point for ATP.

It belongs to the ATPase alpha/beta chains family. As to quaternary structure, F-type ATPases have 2 components, CF(1) - the catalytic core - and CF(0) - the membrane proton channel. CF(1) has five subunits: alpha(3), beta(3), gamma(1), delta(1), epsilon(1). CF(0) has three main subunits: a(1), b(2) and c(9-12). The alpha and beta chains form an alternating ring which encloses part of the gamma chain. CF(1) is attached to CF(0) by a central stalk formed by the gamma and epsilon chains, while a peripheral stalk is formed by the delta and b chains.

Its subcellular location is the cell inner membrane. It catalyses the reaction ATP + H2O + 4 H(+)(in) = ADP + phosphate + 5 H(+)(out). Functionally, produces ATP from ADP in the presence of a proton gradient across the membrane. The catalytic sites are hosted primarily by the beta subunits. The protein is ATP synthase subunit beta of Paramagnetospirillum magneticum (strain ATCC 700264 / AMB-1) (Magnetospirillum magneticum).